A 124-amino-acid chain; its full sequence is Salivary protein 15 Iric-3 (124 aa).

The signal sequence occupies residues 1–22 (MESFVAMKVVCIILLFVIAAEA). N-linked (GlcNAc...) asparagine glycans are attached at residues Asn-82 and Asn-93. The interval 105–124 (GPNNQTCHKKDECVGYIPGC) is CD4-binding.

This sequence belongs to the salp15 family. As to quaternary structure, interacts with host CD4. Interacts with host DC-SIGN (CD209). Interacts with Borrelia outer surface protein C (OspC). As to expression, expressed in salivary glands. Detected in fed adult female.

The protein localises to the secreted. Functionally, salivary tick protein that downregulates host immune system by binding to both dendritic cells, and CD4(+) T cells. Specifically binds to the CD4 coreceptor on T cells. This interaction prevents the activation of the Src kinase, Lck, and its downstream substrate Zap-70, and results in deficient activation of PLCgamma1, the repression of calcium fluxes triggered by T-cell antigen receptor (TCR) ligation, and a subsequent reduction in interleukin-2 production. This salivary protein also binds to DC-SIGN (CD209) on dendritic cells (DC) and activates the Raf-1 kinase/MEK signaling pathway that results in down-regulating expression of pro-inflammatory cytokines. Furthermore, it inhibits T cell proliferation induced by DCs. In addition, it inhibits in vitro keratinocyte inflammation induced by Borrelia burgdorferi or by the major outer surface protein (OspC) of Borrelia. In addition, it downregulates chemokines and monocyte chemoattractant protein 1, as well as several antimicrobial peptides such as defensins, cathelicidin, psoriasin, and RNase 7. Apart from its immunomodulatory activities, it is also associated with protection of Borrelia spirochetes from antibody-mediated killing through its binding to OspC. In vivo, tests on different immune disease animal models show promising therapeutic results, e.g., in inhibiting HIV infection, experimental autoimmune encephalomyelitis, transplantation rejection, and asthma. The protein is Salivary protein 15 Iric-3 of Ixodes ricinus (Common tick).